We begin with the raw amino-acid sequence, 98 residues long: Citrate lyase acyl carrier protein (98 aa).

At serine 14 the chain carries O-(phosphoribosyl dephospho-coenzyme A)serine.

Belongs to the CitD family. As to quaternary structure, oligomer with a subunit composition of (alpha,beta,gamma)6.

It localises to the cytoplasm. In terms of biological role, covalent carrier of the coenzyme of citrate lyase. This is Citrate lyase acyl carrier protein from Albidiferax ferrireducens (strain ATCC BAA-621 / DSM 15236 / T118) (Rhodoferax ferrireducens).